An 845-amino-acid chain; its full sequence is uncharacterized protein (845 aa).

A compositionally biased stretch (polar residues) spans 224 to 241 (SNNIPTGIQDSSKYTVNG). Disordered stretches follow at residues 224-244 (SNNIPTGIQDSSKYTVNGPTE), 324-346 (QGTESISFASKNNSAPSADANNG), 383-434 (RTAN…EGSA), 456-485 (VKASNISTEKSKTIAKPKPAKELSPQATLN), 519-619 (NMTL…PKNS), 674-701 (VVSRTVTSPKSGAYASPSKASYNQDSSP), and 739-785 (RKST…ANKS). A compositionally biased stretch (basic and acidic residues) spans 390–399 (PTKKSNRSEQ). Residues 400–422 (SKTVANTNVGSKNGTTPRSFAQK) show a composition bias toward polar residues. The span at 534 to 546 (NSWRSKYLSEGKN) shows a compositional bias: basic and acidic residues. Over residues 563–576 (SSLASPTKSSASPL) the composition is skewed to low complexity. S567 carries the phosphoserine modification. 2 stretches are compositionally biased toward basic and acidic residues: residues 579–588 (APKETPERLC) and 600–614 (ANLKESELPKEKSDI). Composition is skewed to polar residues over residues 674-683 (VVSRTVTSPK), 691-701 (SKASYNQDSSP), and 743-760 (ADSLSSPKRQSVPSTPKA).

It localises to the mitochondrion. This is an uncharacterized protein from Schizosaccharomyces pombe (strain 972 / ATCC 24843) (Fission yeast).